Consider the following 329-residue polypeptide: DNA-directed RNA polymerase subunit alpha (329 aa).

Residues 1–231 (MSILSFQMPE…KHFMLFSDQT (231 aa)) form an alpha N-terminal domain (alpha-NTD) region. An alpha C-terminal domain (alpha-CTD) region spans residues 247–329 (EEFLHMRKLL…DTAKYKLDED (83 aa)).

It belongs to the RNA polymerase alpha chain family. As to quaternary structure, homodimer. The RNAP catalytic core consists of 2 alpha, 1 beta, 1 beta' and 1 omega subunit. When a sigma factor is associated with the core the holoenzyme is formed, which can initiate transcription.

The catalysed reaction is RNA(n) + a ribonucleoside 5'-triphosphate = RNA(n+1) + diphosphate. Functionally, DNA-dependent RNA polymerase catalyzes the transcription of DNA into RNA using the four ribonucleoside triphosphates as substrates. In Cytophaga hutchinsonii (strain ATCC 33406 / DSM 1761 / CIP 103989 / NBRC 15051 / NCIMB 9469 / D465), this protein is DNA-directed RNA polymerase subunit alpha.